The following is a 323-amino-acid chain: L-lactate dehydrogenase (323 aa).

NAD(+) is bound by residues valine 16, asparagine 37, and 81 to 82 (GA). Residues glutamine 84, arginine 90, and 122-125 (NPVD) each bind substrate. NAD(+) contacts are provided by residues 120–122 (ATN) and serine 145. Residue 150–153 (DSAR) coordinates substrate. Histidine 177 serves as the catalytic Proton acceptor. Tyrosine 221 is subject to Phosphotyrosine. Substrate is bound at residue threonine 230.

It belongs to the LDH/MDH superfamily. LDH family. In terms of assembly, homotetramer.

It localises to the cytoplasm. It carries out the reaction (S)-lactate + NAD(+) = pyruvate + NADH + H(+). The protein operates within fermentation; pyruvate fermentation to lactate; (S)-lactate from pyruvate: step 1/1. In terms of biological role, catalyzes the conversion of lactate to pyruvate. This Limosilactobacillus reuteri (Lactobacillus reuteri) protein is L-lactate dehydrogenase.